We begin with the raw amino-acid sequence, 173 residues long: MPRTQRNDNFIDKSFTVMADLILKVLPTNKKSKEAFAYYRDGMSAQADGEYAEALENYQEALTLEEDPIDRSFILYNIALVHTSNGDHQTALDHYLQALDLNPKMPQALNNIAVIHHFLGQRSEEAGNDDEAERHYDQAAEYWTQAIRLAPNNYIEAQNWLKTTGRSKVDVYF.

TPR repeat units follow at residues 35-68, 72-105, and 120-153; these read AFAY…EEDP, SFIL…NPKM, and GQRS…APNN.

It belongs to the Ycf3 family.

Its subcellular location is the cellular thylakoid membrane. Its function is as follows. Essential for the assembly of the photosystem I (PSI) complex. May act as a chaperone-like factor to guide the assembly of the PSI subunits. This Synechococcus elongatus (strain ATCC 33912 / PCC 7942 / FACHB-805) (Anacystis nidulans R2) protein is Photosystem I assembly protein Ycf3.